Reading from the N-terminus, the 307-residue chain is Probable RuBisCO transcriptional regulator (307 aa).

The region spanning 4-61 (FTLQQLRILKAVATEKNFTKAAELLYLSQPSLSKQIKTLEKNLDILLVNRENNKISLT) is the HTH lysR-type domain. The H-T-H motif DNA-binding region spans 21-40 (FTKAAELLYLSQPSLSKQIK).

It belongs to the LysR transcriptional regulatory family.

It localises to the plastid. The protein localises to the chloroplast. Functionally, trans-acting transcriptional regulator of RuBisCO genes (rbcL and rbcS) expression. This chain is Probable RuBisCO transcriptional regulator (rbcR), found in Phaeodactylum tricornutum (strain CCAP 1055/1).